The following is a 369-amino-acid chain: 1-aminocyclopropane-1-carboxylate oxidase homolog 2 (369 aa).

The 102-residue stretch at 217–318 folds into the Fe2OG dioxygenase domain; the sequence is KGLRMLCHYF…VSVACFFHTH (102 aa). Fe cation contacts are provided by His241, Asp243, and His297.

Belongs to the iron/ascorbate-dependent oxidoreductase family. The cofactor is Fe cation.

The protein is 1-aminocyclopropane-1-carboxylate oxidase homolog 2 of Arabidopsis thaliana (Mouse-ear cress).